The chain runs to 579 residues: Protein disulfide isomerase-like 1-3 (579 aa).

An N-terminal signal peptide occupies residues 1–25; the sequence is MASSSTSISLLLFVSFILLLVNSRA. An N-linked (GlcNAc...) asparagine glycan is attached at asparagine 27. Basic and acidic residues-rich tracts occupy residues 44 to 69 and 80 to 89; these read EESK…RDFE and EFHHGDHGYE. The segment at 44 to 91 is disordered; it reads EESKEQSHGGGSYHEEEHDHQHRDFENYDDLEQGGGEFHHGDHGYEEE. A Thioredoxin 1 domain is found at 81–204; sequence FHHGDHGYEE…IVTWLKKKAS (124 aa). N-linked (GlcNAc...) asparagine glycosylation is found at asparagine 108 and asparagine 115. Residues cysteine 128 and cysteine 131 each act as nucleophile in the active site. An intrachain disulfide couples cysteine 128 to cysteine 131. 4 N-linked (GlcNAc...) asparagine glycosylation sites follow: asparagine 209, asparagine 293, asparagine 313, and asparagine 338. A Thioredoxin 2 domain is found at 416–546; sequence DFLADKLKPF…LYKFLKKHAS (131 aa). Catalysis depends on nucleophile residues cysteine 467 and cysteine 470. A disulfide bridge connects residues cysteine 467 and cysteine 470. Asparagine 520 carries N-linked (GlcNAc...) asparagine glycosylation. The disordered stretch occupies residues 558-579; sequence EPVISTMKSDEKIEGDSSKDEL. Over residues 565–579 the composition is skewed to basic and acidic residues; that stretch reads KSDEKIEGDSSKDEL. A Prevents secretion from ER motif is present at residues 576 to 579; the sequence is KDEL.

Belongs to the protein disulfide isomerase family. In terms of tissue distribution, widely expressed.

It localises to the endoplasmic reticulum lumen. The catalysed reaction is Catalyzes the rearrangement of -S-S- bonds in proteins.. Acts as a protein-folding catalyst that interacts with nascent polypeptides to catalyze the formation, isomerization, and reduction or oxidation of disulfide bonds. In Arabidopsis thaliana (Mouse-ear cress), this protein is Protein disulfide isomerase-like 1-3 (PDIL1-3).